Consider the following 103-residue polypeptide: Thioredoxin-1 (103 aa).

Positions 2 to 103 (VTQFKTASEF…AIKQAIAANA (102 aa)) constitute a Thioredoxin domain. Active-site nucleophile residues include cysteine 30 and cysteine 33. Cysteine 30 and cysteine 33 are oxidised to a cystine. Glycyl lysine isopeptide (Lys-Gly) (interchain with G-Cter in ubiquitin) cross-links involve residues lysine 54, lysine 66, and lysine 96.

The protein belongs to the thioredoxin family. In terms of assembly, monomer. Part of the heterodimeric LMA1 complex together with the proteinase inhibitor PBI2. Most of the thioredoxin of yeast is in this complex rather than the well-studied monomer. LMA1 binds to the ATPase SEC18. Post-translationally, reversible disulfide bond formation between Cys-30 and Cys-33, reverted by thioredoxin reductase TRR1 using NADPH as hydrogen donor.

The protein localises to the nucleus. Its subcellular location is the cytoplasm. It is found in the golgi apparatus membrane. It localises to the mitochondrion intermembrane space. Its function is as follows. Participates as a hydrogen donor in redox reactions through the reversible oxidation of its active center dithiol to a disulfide, accompanied by the transfer of 2 electrons and 2 protons. It is involved in many cellular processes, including deoxyribonucleotide synthesis, repair of oxidatively damaged proteins, protein folding, sulfur metabolism, and redox homeostasis. Thioredoxin-dependent enzymes include phosphoadenosine-phosphosulfate reductase MET16, alkyl-hydroperoxide reductase DOT5, thioredoxin peroxidases TSA1 and TSA2, alkyl hydroperoxide reductase AHP1, and peroxiredoxin HYR1. Thioredoxin is also involved in protection against reducing stress. As part of the LMA1 complex, it is involved in the facilitation of vesicle fusion such as homotypic vacuole and ER-derived COPII vesicle fusion with the Golgi. This activity does not require the redox mechanism. This chain is Thioredoxin-1 (TRX1), found in Saccharomyces cerevisiae (strain ATCC 204508 / S288c) (Baker's yeast).